The primary structure comprises 448 residues: Glutamate--tRNA ligase 1 (448 aa).

A 'HIGH' region motif is present at residues 10–20 (PSPTGMLHVGN). Residues 240 to 244 (KISKR) carry the 'KMSKS' region motif. Position 243 (Lys-243) interacts with ATP.

It belongs to the class-I aminoacyl-tRNA synthetase family. Glutamate--tRNA ligase type 1 subfamily. In terms of assembly, monomer.

It is found in the cytoplasm. The enzyme catalyses tRNA(Glu) + L-glutamate + ATP = L-glutamyl-tRNA(Glu) + AMP + diphosphate. Its function is as follows. Catalyzes the attachment of glutamate to tRNA(Glu) in a two-step reaction: glutamate is first activated by ATP to form Glu-AMP and then transferred to the acceptor end of tRNA(Glu). The polypeptide is Glutamate--tRNA ligase 1 (Rickettsia typhi (strain ATCC VR-144 / Wilmington)).